A 149-amino-acid polypeptide reads, in one-letter code: 4-hydroxyphenylacetate 3-monooxygenase, reductase component (149 aa).

An FAD-binding site is contributed by 27–34; the sequence is ERGMTATA. Ser-37 lines the NAD(+) pocket. Residues 48–50, 54–55, and His-80 contribute to the FAD site; these read AVS and KL. NAD(+) is bound by residues His-116 and 137 to 140; that span reads YFQR.

Belongs to the non-flavoprotein flavin reductase family. HpaC subfamily. Homodimer. 4-HPA 3-monooxygenase consists of a reductase component HpaC and an oxygenase component HpaB.

It catalyses the reaction a reduced flavin + NAD(+) = an oxidized flavin + NADH + 2 H(+). It functions in the pathway aromatic compound metabolism; 4-hydroxyphenylacetate degradation; pyruvate and succinate semialdehyde from 4-hydroxyphenylacetate: step 1/7. In terms of biological role, catalyzes the reduction of free flavins (FMN, FAD and riboflavin) by NADH. Subsequently, the reduced flavins diffuse to the large HpaB component. It utilizes NADH, but not NADPH as an electron donor, and both FAD and FMN as electron acceptors. This Thermus thermophilus (strain ATCC 27634 / DSM 579 / HB8) protein is 4-hydroxyphenylacetate 3-monooxygenase, reductase component.